A 226-amino-acid polypeptide reads, in one-letter code: N-(5'-phosphoribosyl)anthranilate isomerase (226 aa).

The protein belongs to the TrpF family.

It catalyses the reaction N-(5-phospho-beta-D-ribosyl)anthranilate = 1-(2-carboxyphenylamino)-1-deoxy-D-ribulose 5-phosphate. Its pathway is amino-acid biosynthesis; L-tryptophan biosynthesis; L-tryptophan from chorismate: step 3/5. This chain is N-(5'-phosphoribosyl)anthranilate isomerase (trpF), found in Methanocaldococcus jannaschii (strain ATCC 43067 / DSM 2661 / JAL-1 / JCM 10045 / NBRC 100440) (Methanococcus jannaschii).